The chain runs to 309 residues: Probable manganese-dependent inorganic pyrophosphatase (309 aa).

6 residues coordinate Mn(2+): His9, Asp13, Asp15, Asp75, His97, and Asp149.

It belongs to the PPase class C family. Requires Mn(2+) as cofactor.

The protein resides in the cytoplasm. It catalyses the reaction diphosphate + H2O = 2 phosphate + H(+). The polypeptide is Probable manganese-dependent inorganic pyrophosphatase (Bacillus cereus (strain B4264)).